Reading from the N-terminus, the 152-residue chain is Transcriptional regulator MraZ (152 aa).

SpoVT-AbrB domains lie at Ala-5–Glu-52 and Ala-81–Thr-124.

The protein belongs to the MraZ family. Forms oligomers.

The protein resides in the cytoplasm. Its subcellular location is the nucleoid. Functionally, negatively regulates its own expression and that of the subsequent genes in the proximal part of the division and cell wall (dcw) gene cluster. Acts by binding directly to DNA. May also regulate the expression of genes outside the dcw cluster. The polypeptide is Transcriptional regulator MraZ (Shigella flexneri serotype 5b (strain 8401)).